The sequence spans 235 residues: MEEGKQEASMPLVPIDSFSYSWLVNFPSLEATIDDHHQTYEDSSSSSSFIEMDPRLPPSRRFFIKTSHESSFKFDNFVSFSDEDHSLVHADELFRDGYVMPYRLKPTSAATEEESEPLDTTTSEKIDTRGLNSKPSPTSSRKLRRVSKWVLLKYLDFLTPLCKRLRRCRSAVTTGSIGMDSRIRVTTSCRSRVYSDEMTSSPRISVADDYYWRRSCDSESSIYEAVLHCKKSFEK.

The interval 108–140 is disordered; sequence SAATEEESEPLDTTTSEKIDTRGLNSKPSPTSS. The span at 130–140 shows a compositional bias: polar residues; sequence GLNSKPSPTSS.

The protein localises to the cell membrane. May be involved in abscisic acid signaling by acting as a kinase regulator. The sequence is that of Probable membrane-associated kinase regulator 6 (MAKR6) from Arabidopsis thaliana (Mouse-ear cress).